The primary structure comprises 434 residues: Enolase (434 aa).

Residue Q163 participates in (2R)-2-phosphoglycerate binding. E205 serves as the catalytic Proton donor. Residues D242, E291, and D318 each contribute to the Mg(2+) site. 4 residues coordinate (2R)-2-phosphoglycerate: K343, R372, S373, and K394. Catalysis depends on K343, which acts as the Proton acceptor.

The protein belongs to the enolase family. Requires Mg(2+) as cofactor.

The protein resides in the cytoplasm. It localises to the secreted. Its subcellular location is the cell surface. The catalysed reaction is (2R)-2-phosphoglycerate = phosphoenolpyruvate + H2O. The protein operates within carbohydrate degradation; glycolysis; pyruvate from D-glyceraldehyde 3-phosphate: step 4/5. Catalyzes the reversible conversion of 2-phosphoglycerate (2-PG) into phosphoenolpyruvate (PEP). It is essential for the degradation of carbohydrates via glycolysis. In Streptococcus pneumoniae serotype 19F (strain G54), this protein is Enolase.